A 238-amino-acid polypeptide reads, in one-letter code: 1-(5-phosphoribosyl)-5-[(5-phosphoribosylamino)methylideneamino] imidazole-4-carboxamide isomerase (238 aa).

The active-site Proton acceptor is Asp7. The active-site Proton donor is the Asp129.

This sequence belongs to the HisA/HisF family.

The protein localises to the cytoplasm. It carries out the reaction 1-(5-phospho-beta-D-ribosyl)-5-[(5-phospho-beta-D-ribosylamino)methylideneamino]imidazole-4-carboxamide = 5-[(5-phospho-1-deoxy-D-ribulos-1-ylimino)methylamino]-1-(5-phospho-beta-D-ribosyl)imidazole-4-carboxamide. It participates in amino-acid biosynthesis; L-histidine biosynthesis; L-histidine from 5-phospho-alpha-D-ribose 1-diphosphate: step 4/9. The polypeptide is 1-(5-phosphoribosyl)-5-[(5-phosphoribosylamino)methylideneamino] imidazole-4-carboxamide isomerase (Leuconostoc mesenteroides subsp. mesenteroides (strain ATCC 8293 / DSM 20343 / BCRC 11652 / CCM 1803 / JCM 6124 / NCDO 523 / NBRC 100496 / NCIMB 8023 / NCTC 12954 / NRRL B-1118 / 37Y)).